Reading from the N-terminus, the 246-residue chain is 1-(5-phosphoribosyl)-5-[(5-phosphoribosylamino)methylideneamino] imidazole-4-carboxamide isomerase (246 aa).

Residue D10 is the Proton acceptor of the active site. Residue D131 is the Proton donor of the active site.

Belongs to the HisA/HisF family.

It localises to the cytoplasm. The enzyme catalyses 1-(5-phospho-beta-D-ribosyl)-5-[(5-phospho-beta-D-ribosylamino)methylideneamino]imidazole-4-carboxamide = 5-[(5-phospho-1-deoxy-D-ribulos-1-ylimino)methylamino]-1-(5-phospho-beta-D-ribosyl)imidazole-4-carboxamide. Its pathway is amino-acid biosynthesis; L-histidine biosynthesis; L-histidine from 5-phospho-alpha-D-ribose 1-diphosphate: step 4/9. This Acidiphilium cryptum (strain JF-5) protein is 1-(5-phosphoribosyl)-5-[(5-phosphoribosylamino)methylideneamino] imidazole-4-carboxamide isomerase.